We begin with the raw amino-acid sequence, 517 residues long: Benzoate 4-monooxygenase bphA (517 aa).

A helical membrane pass occupies residues 4–24 (LLLSPYGAYLGLALLVLYYLL). Asn282 and Asn325 each carry an N-linked (GlcNAc...) asparagine glycan. Cys461 contributes to the heme binding site.

Belongs to the cytochrome P450 family. Heme serves as cofactor.

Its subcellular location is the membrane. The enzyme catalyses benzoate + reduced [NADPH--hemoprotein reductase] + O2 = 4-hydroxybenzoate + oxidized [NADPH--hemoprotein reductase] + H2O + H(+). In terms of biological role, cytochrome P450 monooxygenase; part of the benzoic acid degradation pathway also known as the protocatechuic acid pathway. Benzoic acid debradation begins with the conversion of benzoic acid into 4-hydroxybenzoic acid through hydroxylation by the benzoate-4-monooxygenase bphA, and its partner NADPH-cytochrome P450 reductase cprA which act as a mediator in electron donation from NADPH. 4-Hydroxybenzoic acid is then converted into 3,4-dihydroxybenzoic acid (also called protocatechuic acid) by the p-hydroxybenzoate-m-hydroxylase phhA. Protocatechuic acid is converted into 3-carboxy-cis,cis-muconic acid by the intradiol ring-cleavage dioxygenase prcA, which is further metabolized through the 3-oxoadipate pathway to finally enter the tricarboxylic acid cycle (TCA). This Aspergillus niger (strain ATCC MYA-4892 / CBS 513.88 / FGSC A1513) protein is Benzoate 4-monooxygenase bphA.